The chain runs to 117 residues: Biofilm growth-associated repressor (117 aa).

An HTH arsR-type domain is found at 20 to 114; the sequence is AMEKRATEVA…ALYAIFCAPE (95 aa). The segment at residues 54-77 is a DNA-binding region (H-T-H motif); sequence VGELEAKLDIRQPTLSQQLGVLRE.

Functionally, represses an operon that comprises at least itself and blh. Binds to a palindromic AT-rich sequence spanning the -10 region of the blh promoter and blocks transcription of the operon. In Agrobacterium fabrum (strain C58 / ATCC 33970) (Agrobacterium tumefaciens (strain C58)), this protein is Biofilm growth-associated repressor (bigR).